A 31-amino-acid chain; its full sequence is Cyclotide cter-J (31 aa).

Residues 1–31 (GTVPCGESCVFIPCITGIAGCSCKNKVCYID) constitute a cross-link (cyclopeptide (Gly-Asp)). 3 cysteine pairs are disulfide-bonded: cysteine 5-cysteine 21, cysteine 9-cysteine 23, and cysteine 14-cysteine 28.

Post-translationally, contains 3 disulfide bonds. This is a cyclic peptide.

Functionally, probably participates in a plant defense mechanism. The sequence is that of Cyclotide cter-J from Clitoria ternatea (Butterfly pea).